The primary structure comprises 674 residues: Carbon monoxide dehydrogenase/acetyl-CoA synthase subunit beta (674 aa).

The interval 1–25 (MPRFRDLSHNCRPSEAPRVMEPKNR) is disordered. Residues C59, C67, C68, C71, C76, and C90 each coordinate [4Fe-4S] cluster. [Ni-4Fe-4S] cluster-binding residues include H283, C317, C355, C470, C500, and C550.

As to quaternary structure, tetramer of two alpha and two beta chains. [Ni-Fe-S] cluster serves as cofactor. The cofactor is [4Fe-4S] cluster.

The catalysed reaction is CO + 2 oxidized [2Fe-2S]-[ferredoxin] + H2O = 2 reduced [2Fe-2S]-[ferredoxin] + CO2 + 2 H(+). Its function is as follows. The beta subunit (this protein) generates CO from CO(2), while the alpha subunit combines the CO with CoA and a methyl group to form acetyl-CoA. The methyl group, which is incorporated into acetyl-CoA, is transferred to the alpha subunit by a corrinoid iron-sulfur protein. The sequence is that of Carbon monoxide dehydrogenase/acetyl-CoA synthase subunit beta from Moorella thermoacetica (Clostridium thermoaceticum).